The sequence spans 711 residues: Early transcription factor 82 kDa subunit (711 aa).

It belongs to the poxviridae VETF large subunit family. As to quaternary structure, heterodimer of a 70 kDa and a 82 kDa subunit. Part of the early transcription complex composed of ETF, RAP94, and the DNA-directed RNA polymerase.

Its function is as follows. Acts with RNA polymerase to initiate transcription from early gene promoters. Is recruited by the RPO-associated protein of 94 kDa (RAP94) to form the early transcription complex, which also contains the core RNA polymerase. ETF heterodimer binds to early gene promoters. This Oryctolagus cuniculus (Rabbit) protein is Early transcription factor 82 kDa subunit (VETFL).